A 329-amino-acid chain; its full sequence is Bifunctional nuclease 2 (329 aa).

One can recognise a BFN domain in the interval 121-256 (CVHNNPQGGN…YLAYSDGMRV (136 aa)). The UVR domain occupies 287 to 322 (DTKEFDLVRNMMQAVDEERYDEAAEWRDKLGKFQAK).

Belongs to the bifunctional nuclease family.

The protein localises to the nucleus. Its function is as follows. Bifunctional nuclease with both RNase and DNase activities. Involved in basal defense response. Participates in abscisic acid-derived callose deposition following infection by a necrotrophic pathogen. This Arabidopsis thaliana (Mouse-ear cress) protein is Bifunctional nuclease 2 (BBD2).